Here is a 630-residue protein sequence, read N- to C-terminus: Polygalacturonase-1 non-catalytic subunit beta (630 aa).

An N-terminal signal peptide occupies residues 1-27; sequence MHTKIHLPPCILLLLLFSLPSFNVVVG. The propeptide occupies 28-108; that stretch reads GDGESGNPFT…MCAPDLSPSL (81 aa). Residues asparagine 124, asparagine 142, asparagine 256, asparagine 334, asparagine 369, and asparagine 387 are each glycosylated (N-linked (GlcNAc...) asparagine). Residues 398–630 constitute a propeptide that is removed on maturation; sequence EVNGGKKVNN…ENDMTWAIAD (233 aa). The BURP domain maps to 415–629; sequence FFREKMLKSG…FENDMTWAIA (215 aa).

As to quaternary structure, interacts with polygalacturonase-2 (isoenzymes PG2A and PG2B) to form heterodimers called polygalacturonase-1 (PG1). Mostly expressed in fruit pericarp. Also detected at low levels in cell wall of roots, leaves and flowers (at protein level).

The protein localises to the secreted. Its subcellular location is the extracellular space. The protein resides in the apoplast. It localises to the cell wall. Its function is as follows. Non-catalytic subunit of the polygalacturonase isozyme 1 (PG1). Necessary and sufficient to convert the polygalacturonase from its monomeric form PG2 to its heterodimeric form PG1. Seems to limit the depolymerization and solubilization of cell wall polyuronides mediated by PG2 during ripening, probably by recruiting PG2 to form PG1. The polypeptide is Polygalacturonase-1 non-catalytic subunit beta (GP1) (Solanum lycopersicum (Tomato)).